The sequence spans 88 residues: Kunitz-type serine protease inhibitor taicotoxin (88 aa).

The signal sequence occupies residues 1-24; that stretch reads MSSGGLLLLLGLLTLWEVLTPVSS. One can recognise a BPTI/Kunitz inhibitor domain in the interval 31 to 81; sequence CHLPPKPGPCRAAIPRFYYNPHSKQCEKFIYGGCHGNANSFKTPDECNYTC. Disulfide bonds link C31–C81, C40–C64, and C56–C77. Residues 87–88 constitute a propeptide that is removed on maturation; sequence PK.

This sequence belongs to the venom Kunitz-type family. In terms of assembly, heterotrimer composed of an alpha-neurotoxin-like peptide of 8 kDa (AC P0CJ35), a neurotoxic phospholipase of 16 kDa (AC Q7LZG2) and this serine protease inhibitor of 7 kDa at an approximate stoichiometry of 1:1:4; non-covalently linked. Expressed by the venom gland.

It localises to the secreted. Its function is as follows. Heterotrimer: blocks the voltage-dependent L-type calcium channels (Cav) from the heart, and the small conductance calcium-activated potassium channels (KCa) in the chromaffin cells and in the brain. Is very toxic to mice. Monomer: serine protease inhibitor that inhibits plasma kallikrein (Ki=0.057 nM), tissue kallikrein (Ki=0.23 nM), trypsin (Ki=0.31 nM), plasmin (Ki=6.1 nM), elastase (Ki=201 nM), factor Xa (Ki=871 nM), alpha-factor XIIa (Ki=2380 nM). Does not inhibit APC, urokinase-type plasminogen activator (uPA/PLAU), tissue plasminogen activator (tPA/PLAT), thrombin and factor VIIa. In addition, the monomer inhibits fibrinolysis in whole blood and prolonged the intrinsec clotting time. The chain is Kunitz-type serine protease inhibitor taicotoxin from Oxyuranus scutellatus scutellatus (Australian taipan).